We begin with the raw amino-acid sequence, 642 residues long: 3D-(3,5/4)-trihydroxycyclohexane-1,2-dione hydrolase (642 aa).

E71 contacts thiamine diphosphate. A thiamine pyrophosphate binding region spans residues 446 to 526 (SLPGDVQRIW…INILVFDNSG (81 aa)). 2 residues coordinate Mg(2+): D497 and N524.

Belongs to the TPP enzyme family. The cofactor is Mg(2+). Thiamine diphosphate is required as a cofactor.

It catalyses the reaction 3D-3,5/4-trihydroxycyclohexane-1,2-dione + H2O = 5-deoxy-D-glucuronate + H(+). It participates in polyol metabolism; myo-inositol degradation into acetyl-CoA; acetyl-CoA from myo-inositol: step 3/7. Functionally, involved in the cleavage of the C1-C2 bond of 3D-(3,5/4)-trihydroxycyclohexane-1,2-dione (THcHDO) to yield 5-deoxy-glucuronate (5DG). This chain is 3D-(3,5/4)-trihydroxycyclohexane-1,2-dione hydrolase, found in Lacticaseibacillus casei (Lactobacillus casei).